Here is a 370-residue protein sequence, read N- to C-terminus: Protein maelstrom 2 (370 aa).

Positions 2–68 form a DNA-binding region, HMG box; sequence AQNKPNAFMA…VLERESKTER (67 aa).

This sequence belongs to the maelstrom family.

The protein localises to the cytoplasm. The protein resides in the nucleus. Involved both in the piRNA and miRNA metabolic processes. As a component of the meiotic nuage, plays a central role during oogenesis by repressing transposable elements and preventing their mobilization, which is essential for the germline integrity. Repression of transposable elements is mediated via the piRNA metabolic process, which mediates the repression of transposable elements during meiosis by forming complexes composed of piRNAs and Piwi proteins and governs the repression of transposons. As a nuclear component, it is required for proper differentiation in the germline stem cell (GSC) lineage by repressing microRNA-7 (miR-7), thereby acting as an indirect regulator of bag-of-marbles (Bam). Acts by binding to the promoter of miR-7 gene and repressing its expression; miR-7 repression alleviates the Bam repression by miR-7, thereby allowing differentiation in the germline stem cell (GSC) lineage. This chain is Protein maelstrom 2 (mael2), found in Drosophila pseudoobscura pseudoobscura (Fruit fly).